A 229-amino-acid chain; its full sequence is Imidazoleglycerol-phosphate dehydratase (229 aa).

Belongs to the imidazoleglycerol-phosphate dehydratase family.

The enzyme catalyses D-erythro-1-(imidazol-4-yl)glycerol 3-phosphate = 3-(imidazol-4-yl)-2-oxopropyl phosphate + H2O. It functions in the pathway amino-acid biosynthesis; L-histidine biosynthesis; L-histidine from 5-phospho-alpha-D-ribose 1-diphosphate: step 6/9. This chain is Imidazoleglycerol-phosphate dehydratase, found in Neurospora crassa (strain ATCC 24698 / 74-OR23-1A / CBS 708.71 / DSM 1257 / FGSC 987).